The primary structure comprises 130 residues: Small ribosomal subunit protein uS11c (130 aa).

This sequence belongs to the universal ribosomal protein uS11 family. As to quaternary structure, part of the 30S ribosomal subunit.

It localises to the plastid. Its subcellular location is the chloroplast. This chain is Small ribosomal subunit protein uS11c, found in Oedogonium cardiacum (Filamentous green alga).